A 256-amino-acid chain; its full sequence is Dioxygenase lolE1 (256 aa).

3 residues coordinate Fe cation: histidine 125, aspartate 127, and histidine 203.

It belongs to the PhyH family. Homodimer. The cofactor is Fe cation.

It participates in alkaloid biosynthesis. In terms of biological role, dioxygenase; part of the gene cluster that mediates the biosynthesis of loline alkaloids, potent insecticidal agents composed of a pyrrolizidine ring system and an uncommon ether bridge linking carbons 2 and 7. Lolines are structurally differentiated by the various modifications of the L-amino group and include norloline, loline, N-methylloline, N-acetylloline, N-acetylnorloline, and N-formylloline. The first committed step is the condensation of O-acetyl-L-homoserine (derived from L-aspartic acid) and L-proline, probably catalyzed by the gamma-type pyridoxal 5'-phosphate(PLP)-dependent enzyme lolC, to give the diamino diacid, NACPP. Ensuing cyclization, decarboxylation, and acetylation steps yield 1-exo-acetamidopyrrolizidine (AcAP). LolO is required for installation of the ether bridge upon the pathway intermediate, 1-exo-acetamidopyrrolizidine (AcAP). In sequential 2-oxoglutarate- and O(2)-consuming steps, lolO removes hydrogens from C2 and C7 of AcAP to form both carbon-oxygen bonds in N-acetylnorloline (NANL), the precursor to all other lolines. The enzymes lolD, lolE, lolF and lolT have also been proposed to be involved in the ether-bridge installation. Further processing of the exocyclic moiety of NANL by fungal N-acetamidase (LolN), methyltransferase (LolM), and cytochrome P450 (LolP) enzymes, with occasional involvement of a plant acetyltransferase, generates the other known lolines. LolN transforms NANL to norlonine which is monomethylated and dimethylated to respectively lonine and N-methyllonine (NML) by lolM. LolP catalyzes hydroxylation of the methyl group in N-methylloline (NML) and further oxygenation to N-formylloline (NFL). A plant acetyltransferase is responsible for the acetylation of loline to form N-acetylloline (NAL). LolA might interact with aspartate kinase to prevent feedback inhibition of its activity by these end products and thereby promote production of L-homoserine from L-aspartate. This chain is Dioxygenase lolE1, found in Epichloe uncinata (Endophyte fungus).